Reading from the N-terminus, the 153-residue chain is MDQEAMGNIVLLAIVTLISVVQNAFFAHKVEHESKTHNGRSFQRTGTPAFERVYTANQNCVDAYPTFLVVLWSAGLFCSQVPAAFAGLMYLFVRQKYFVGYLGERTQSTPGYIFGKRIILFLFLMSLAGIFNYFLILFFGSDFENYIKTITTT.

At 1-8 the chain is on the lumenal side; that stretch reads MDQEAMGN. Residues 9 to 30 traverse the membrane as a helical segment; it reads IVLLAIVTLISVVQNAFFAHKV. Topologically, residues 31-52 are cytoplasmic; it reads EHESKTHNGRSFQRTGTPAFER. Residues 53–77 form a helical membrane-spanning segment; that stretch reads VYTANQNCVDAYPTFLVVLWSAGLF. Topologically, residues 78-80 are lumenal; that stretch reads CSQ. The chain crosses the membrane as a helical span at residues 81-102; that stretch reads VPAAFAGLMYLFVRQKYFVGYL. Residues 103-107 lie on the Cytoplasmic side of the membrane; that stretch reads GERTQ. An intramembrane segment occupies 108–115; sequence STPGYIFG. The chain crosses the membrane as a helical span at residues 116 to 128; that stretch reads KRIILFLFLMSLA. At 129-153 the chain is on the lumenal side; it reads GIFNYFLILFFGSDFENYIKTITTT.

This sequence belongs to the MAPEG family. In terms of assembly, homotrimer. Interacts with LTC4S and ALOX5.

The protein localises to the nucleus membrane. Its subcellular location is the endoplasmic reticulum membrane. In terms of biological role, required for leukotriene biosynthesis by ALOX5 (5-lipoxygenase). Anchors ALOX5 to the membrane. Binds arachidonic acid, and could play an essential role in the transfer of arachidonic acid to ALOX5. Binds to MK-886, a compound that blocks the biosynthesis of leukotrienes. The protein is Arachidonate 5-lipoxygenase-activating protein (ALOX5AP) of Sus scrofa (Pig).